We begin with the raw amino-acid sequence, 393 residues long: Methylthioribose kinase (393 aa).

ATP contacts are provided by residues asparagine 38, lysine 53, and 107 to 109; that span reads EDL. Residue aspartate 225 participates in substrate binding. 242 to 244 is a binding site for ATP; the sequence is DPE. Arginine 332 lines the substrate pocket.

The protein belongs to the methylthioribose kinase family. In terms of assembly, homodimer.

The catalysed reaction is 5-(methylsulfanyl)-D-ribose + ATP = 5-(methylsulfanyl)-alpha-D-ribose 1-phosphate + ADP + H(+). It participates in amino-acid biosynthesis; L-methionine biosynthesis via salvage pathway; S-methyl-5-thio-alpha-D-ribose 1-phosphate from S-methyl-5'-thioadenosine (hydrolase route): step 2/2. Catalyzes the phosphorylation of methylthioribose into methylthioribose-1-phosphate. The polypeptide is Methylthioribose kinase (Bacillus cereus (strain ATCC 14579 / DSM 31 / CCUG 7414 / JCM 2152 / NBRC 15305 / NCIMB 9373 / NCTC 2599 / NRRL B-3711)).